Consider the following 236-residue polypeptide: Alpha-S2-casein (236 aa).

Residues 1 to 15 (MKFFIFTCLLAVALA) form the signal peptide. Ser-23, Ser-24, Ser-25, Ser-28, Ser-47, Ser-80, Ser-81, Ser-82, Ser-85, Ser-157, and Ser-169 each carry phosphoserine. Residues 72–93 (PTEVYSSSSSSEESAKFPTERE) are disordered. A compositionally biased stretch (basic and acidic residues) spans 84 to 93 (ESAKFPTERE).

Belongs to the alpha-casein family. In terms of processing, there are at least three different forms found in milk, with varying degrees of phosphorylation. These include form 10-P which is phosphorylated at ten sites that have not been determined, form 11-P which is phosphorylated at eleven sites and form 12-P which is phosphorylated at twelve sites. As to expression, mammary gland specific. Secreted in milk.

The protein localises to the secreted. Important role in the capacity of milk to transport calcium phosphate. In Equus asinus (Donkey), this protein is Alpha-S2-casein.